Reading from the N-terminus, the 313-residue chain is MTHVPVLYTQAMEGLRVVENGTYLDGTFGRGGHARGVLQQLGPGGRLLVMDKDPEAIAMAERVFSCDPRVVIRHGSFALLAQLAAPQSLDGVLFDLGVSSPQLDVPERGFSFAKDGPLDMRMDPEMGESAAQWLARVSEREIAEVLWTYGEEKQSRRIARAIVAYRANQPLLRTVQLAELIASVMLRTKSGACKSRIHPATRSFQGIRIHVNRELVDLEVGLEAALAALRPGGRLVVISFHSLEDRIVKQFISRHAKVPPTNRRLPEVQTFVPLLRMIGRAIKADEDELEVNPRARSAVLRVAEKLDVLEAVR.

S-adenosyl-L-methionine is bound by residues 31–33 (GGH), aspartate 51, phenylalanine 77, aspartate 95, and glutamine 102.

The protein belongs to the methyltransferase superfamily. RsmH family.

It is found in the cytoplasm. It carries out the reaction cytidine(1402) in 16S rRNA + S-adenosyl-L-methionine = N(4)-methylcytidine(1402) in 16S rRNA + S-adenosyl-L-homocysteine + H(+). Functionally, specifically methylates the N4 position of cytidine in position 1402 (C1402) of 16S rRNA. The polypeptide is Ribosomal RNA small subunit methyltransferase H (Xylella fastidiosa (strain M12)).